Here is a 122-residue protein sequence, read N- to C-terminus: S-adenosylmethionine decarboxylase proenzyme (122 aa).

The Schiff-base intermediate with substrate; via pyruvic acid role is filled by Ser63. Position 63 is a pyruvic acid (Ser); by autocatalysis (Ser63). His68 functions as the Proton acceptor; for processing activity in the catalytic mechanism. The active-site Proton donor; for catalytic activity is Cys83.

This sequence belongs to the prokaryotic AdoMetDC family. Type 1 subfamily. Heterotetramer of two alpha and two beta chains arranged as a dimer of alpha/beta heterodimers. Pyruvate serves as cofactor. Post-translationally, is synthesized initially as an inactive proenzyme. Formation of the active enzyme involves a self-maturation process in which the active site pyruvoyl group is generated from an internal serine residue via an autocatalytic post-translational modification. Two non-identical subunits are generated from the proenzyme in this reaction, and the pyruvate is formed at the N-terminus of the alpha chain, which is derived from the carboxyl end of the proenzyme. The post-translation cleavage follows an unusual pathway, termed non-hydrolytic serinolysis, in which the side chain hydroxyl group of the serine supplies its oxygen atom to form the C-terminus of the beta chain, while the remainder of the serine residue undergoes an oxidative deamination to produce ammonia and the pyruvoyl group blocking the N-terminus of the alpha chain.

It carries out the reaction S-adenosyl-L-methionine + H(+) = S-adenosyl 3-(methylsulfanyl)propylamine + CO2. Its pathway is amine and polyamine biosynthesis; S-adenosylmethioninamine biosynthesis; S-adenosylmethioninamine from S-adenosyl-L-methionine: step 1/1. Catalyzes the decarboxylation of S-adenosylmethionine to S-adenosylmethioninamine (dcAdoMet), the propylamine donor required for the synthesis of the polyamines spermine and spermidine from the diamine putrescine. This chain is S-adenosylmethionine decarboxylase proenzyme, found in Methanococcus maripaludis (strain C5 / ATCC BAA-1333).